Here is a 167-residue protein sequence, read N- to C-terminus: 2-C-methyl-D-erythritol 2,4-cyclodiphosphate synthase (167 aa).

The a divalent metal cation site is built by Asp-8 and His-10. Residues 8–10 (DIH) and 34–35 (HS) contribute to the 4-CDP-2-C-methyl-D-erythritol 2-phosphate site. His-42 is a binding site for a divalent metal cation. Residues 56-58 (DIG) and Arg-142 contribute to the 4-CDP-2-C-methyl-D-erythritol 2-phosphate site.

It belongs to the IspF family. In terms of assembly, homotrimer. Requires a divalent metal cation as cofactor.

The catalysed reaction is 4-CDP-2-C-methyl-D-erythritol 2-phosphate = 2-C-methyl-D-erythritol 2,4-cyclic diphosphate + CMP. It functions in the pathway isoprenoid biosynthesis; isopentenyl diphosphate biosynthesis via DXP pathway; isopentenyl diphosphate from 1-deoxy-D-xylulose 5-phosphate: step 4/6. Its function is as follows. Involved in the biosynthesis of isopentenyl diphosphate (IPP) and dimethylallyl diphosphate (DMAPP), two major building blocks of isoprenoid compounds. Catalyzes the conversion of 4-diphosphocytidyl-2-C-methyl-D-erythritol 2-phosphate (CDP-ME2P) to 2-C-methyl-D-erythritol 2,4-cyclodiphosphate (ME-CPP) with a corresponding release of cytidine 5-monophosphate (CMP). The chain is 2-C-methyl-D-erythritol 2,4-cyclodiphosphate synthase from Buchnera aphidicola subsp. Schizaphis graminum (strain Sg).